Reading from the N-terminus, the 978-residue chain is Exocyst complex component 5 (978 aa).

The span at 1–11 (MSWARNIQSRI) shows a compositional bias: polar residues. 2 disordered regions span residues 1 to 87 (MSWA…TTTQ) and 122 to 246 (TSPS…TTPY). Low complexity-rich tracts occupy residues 36–52 (PSSP…TSLT) and 62–86 (SQPT…TTTT). Residues 122 to 142 (TSPSMASPIGTSTGIQNPNAK) show a composition bias toward polar residues. Residues 143–245 (PSSLPSPSQS…QPTPIKQTTP (103 aa)) show a composition bias toward low complexity. Residues 303 to 325 (NTQLQLSQLESNIDRRLDDLAEE) are a coiled coil.

The protein belongs to the SEC10 family. As to quaternary structure, the exocyst complex is composed of sec3/exoc1, sec5/exoc2, sec6/exoc3, sec8/exoc4, sec10/exoc5, sec15/exoc6, exo70/exoc7 and exo84/exoc8.

Functionally, component of the exocyst complex involved in the docking of exocytic vesicles with fusion sites on the plasma membrane. This chain is Exocyst complex component 5 (exoc5), found in Dictyostelium discoideum (Social amoeba).